Consider the following 623-residue polypeptide: Protein vein (623 aa).

The signal sequence occupies residues M1–A40. 4 disordered regions span residues I70 to N98, D130 to K162, A184 to S214, and P229 to N317. 2 stretches are compositionally biased toward low complexity: residues L72–N98 and P136–Q158. A glycan (N-linked (GlcNAc...) asparagine) is linked at N76. Residue N211 is glycosylated (N-linked (GlcNAc...) asparagine). Over residues L233–G248 the composition is skewed to basic and acidic residues. Residue N252 is glycosylated (N-linked (GlcNAc...) asparagine). Residues R255–Q267 show a composition bias toward low complexity. A compositionally biased stretch (basic residues) spans Q305–Y316. 6 N-linked (GlcNAc...) asparagine glycosylation sites follow: N350, N381, N424, N449, N521, and N574. Positions T457–A542 constitute an Ig-like C2-type domain. Cystine bridges form between C478/C531, C566/C577, C571/C588, and C590/C599. Residues A561–C599 form the EGF-like domain.

Its subcellular location is the secreted. Ligand for the EGF receptor. Seems to play a role in the global proliferation of wing disc cells and the larval patterning. Shows a strong synergistic genetic interaction with spi, suggesting a molecular interdependence. Required for the development of interveins cells. In Drosophila melanogaster (Fruit fly), this protein is Protein vein (vn).